Reading from the N-terminus, the 339-residue chain is 5-dehydro-2-deoxygluconokinase (339 aa).

It belongs to the carbohydrate kinase PfkB family.

The enzyme catalyses 5-dehydro-2-deoxy-D-gluconate + ATP = 6-phospho-5-dehydro-2-deoxy-D-gluconate + ADP + H(+). It functions in the pathway polyol metabolism; myo-inositol degradation into acetyl-CoA; acetyl-CoA from myo-inositol: step 5/7. Functionally, catalyzes the phosphorylation of 5-dehydro-2-deoxy-D-gluconate (2-deoxy-5-keto-D-gluconate or DKG) to 6-phospho-5-dehydro-2-deoxy-D-gluconate (DKGP). The sequence is that of 5-dehydro-2-deoxygluconokinase from Clostridium tetani (strain Massachusetts / E88).